Here is a 417-residue protein sequence, read N- to C-terminus: Serine hydroxymethyltransferase (417 aa).

(6S)-5,6,7,8-tetrahydrofolate is bound by residues Leu-121 and 125–127; that span reads GHL. At Lys-229 the chain carries N6-(pyridoxal phosphate)lysine. 355-357 contributes to the (6S)-5,6,7,8-tetrahydrofolate binding site; that stretch reads SPF.

Belongs to the SHMT family. In terms of assembly, homodimer. Pyridoxal 5'-phosphate is required as a cofactor.

The protein localises to the cytoplasm. The catalysed reaction is (6R)-5,10-methylene-5,6,7,8-tetrahydrofolate + glycine + H2O = (6S)-5,6,7,8-tetrahydrofolate + L-serine. It functions in the pathway one-carbon metabolism; tetrahydrofolate interconversion. Its pathway is amino-acid biosynthesis; glycine biosynthesis; glycine from L-serine: step 1/1. Functionally, catalyzes the reversible interconversion of serine and glycine with tetrahydrofolate (THF) serving as the one-carbon carrier. This reaction serves as the major source of one-carbon groups required for the biosynthesis of purines, thymidylate, methionine, and other important biomolecules. Also exhibits THF-independent aldolase activity toward beta-hydroxyamino acids, producing glycine and aldehydes, via a retro-aldol mechanism. This Stenotrophomonas maltophilia (strain R551-3) protein is Serine hydroxymethyltransferase.